We begin with the raw amino-acid sequence, 294 residues long: 3-methyl-2-oxobutanoate hydroxymethyltransferase 1 (294 aa).

A Mg(2+)-binding site is contributed by Asp-55. Residues 55–56 (DS) and Lys-123 contribute to the 3-methyl-2-oxobutanoate site. Residue Glu-192 is the Proton acceptor of the active site.

This sequence belongs to the PanB family. In terms of assembly, homodecamer; pentamer of dimers. The cofactor is Mg(2+).

It is found in the cytoplasm. The enzyme catalyses 3-methyl-2-oxobutanoate + (6R)-5,10-methylene-5,6,7,8-tetrahydrofolate + H2O = 2-dehydropantoate + (6S)-5,6,7,8-tetrahydrofolate. The protein operates within cofactor biosynthesis; (R)-pantothenate biosynthesis; (R)-pantoate from 3-methyl-2-oxobutanoate: step 1/2. Functionally, catalyzes the reversible reaction in which hydroxymethyl group from 5,10-methylenetetrahydrofolate is transferred onto alpha-ketoisovalerate to form ketopantoate. This is 3-methyl-2-oxobutanoate hydroxymethyltransferase 1 from Methylibium petroleiphilum (strain ATCC BAA-1232 / LMG 22953 / PM1).